We begin with the raw amino-acid sequence, 159 residues long: ATP synthase subunit b (159 aa).

Residues V7–W27 traverse the membrane as a helical segment.

Belongs to the ATPase B chain family. In terms of assembly, F-type ATPases have 2 components, F(1) - the catalytic core - and F(0) - the membrane proton channel. F(1) has five subunits: alpha(3), beta(3), gamma(1), delta(1), epsilon(1). F(0) has three main subunits: a(1), b(2) and c(10-14). The alpha and beta chains form an alternating ring which encloses part of the gamma chain. F(1) is attached to F(0) by a central stalk formed by the gamma and epsilon chains, while a peripheral stalk is formed by the delta and b chains.

The protein localises to the cell membrane. F(1)F(0) ATP synthase produces ATP from ADP in the presence of a proton or sodium gradient. F-type ATPases consist of two structural domains, F(1) containing the extramembraneous catalytic core and F(0) containing the membrane proton channel, linked together by a central stalk and a peripheral stalk. During catalysis, ATP synthesis in the catalytic domain of F(1) is coupled via a rotary mechanism of the central stalk subunits to proton translocation. In terms of biological role, component of the F(0) channel, it forms part of the peripheral stalk, linking F(1) to F(0). The protein is ATP synthase subunit b of Clostridium botulinum (strain Alaska E43 / Type E3).